Consider the following 357-residue polypeptide: MSCSYYGKCAGCNLNLPYNDEISFKTDFLKSEFKEFYQGEIEIFKSDEWNFRNHAEFGIWHEKGDVFYTMRGNSNERVKIETCPKMDKKIVEMMPKLLQNLRENKNLKERLFGIEFIATKFDFMAILLYHKDIFNIKDDLAKLAEILDIKISARSRGKFLNFGGEILREKVQNFIYRFNADAFFQSNTKVNEKMILFVLNAVKNGKDLLEMYCGHGNFTLPLASEFGKILANEISKNSIKNARENSKNKDNINFVRMSAKELIDAFNGVREFNRLKDIDITDFDFSHVLVDPPRAGIEPEVLDFIQNFKNIIYISCNPASLKQNLQILCETHKITKFALFDQFVHTEHIECGVVLQK.

5 residues coordinate S-adenosyl-L-methionine: Gln185, Tyr212, Asn217, Glu233, and Asp291. Catalysis depends on Cys316, which acts as the Nucleophile. Glu350 (proton acceptor) is an active-site residue.

The protein belongs to the class I-like SAM-binding methyltransferase superfamily. RNA M5U methyltransferase family. TrmA subfamily.

It catalyses the reaction uridine(54) in tRNA + S-adenosyl-L-methionine = 5-methyluridine(54) in tRNA + S-adenosyl-L-homocysteine + H(+). It carries out the reaction uridine(341) in tmRNA + S-adenosyl-L-methionine = 5-methyluridine(341) in tmRNA + S-adenosyl-L-homocysteine + H(+). Dual-specificity methyltransferase that catalyzes the formation of 5-methyluridine at position 54 (m5U54) in all tRNAs, and that of position 341 (m5U341) in tmRNA (transfer-mRNA). The protein is tRNA/tmRNA (uracil-C(5))-methyltransferase of Campylobacter hominis (strain ATCC BAA-381 / DSM 21671 / CCUG 45161 / LMG 19568 / NCTC 13146 / CH001A).